Here is a 262-residue protein sequence, read N- to C-terminus: Probable esterase azaC (262 aa).

Active-site charge relay system residues include Ser-119, Asp-188, and His-216.

It belongs to the LovG family.

It functions in the pathway secondary metabolite biosynthesis. Its function is as follows. Probable esterase; part of the gene cluster that mediates the biosynthesis of azaphilones, a class of fungal metabolites characterized by a highly oxygenated pyrano-quinone bicyclic core and exhibiting a broad range of bioactivities. In the first step, the non-reducing polyketide synthase azaA forms the hexaketide precursor from successive condensations of five malonyl-CoA units, presumably with a simple acetyl-CoA starter unit. The reactive polyketide chain then undergoes a PT-mediated C2-C7 cyclization to afford the aromatic ring and is eventually released as an aldehyde through the R-domain. The putative ketoreductase azaE is proposed to catalyze the reduction of the terminal ketone resulting in the early culture product FK17-P2a. The monooxygenase azaH was demonstrated to be the only enzyme required to convert FK17-P2a to azanigerone E. AzaH first hydroxylates the benzaldehyde intermediate FK17-P2a at C4, which triggers the formation of the pyran-ring to afford azanigerone E. In parallel, the 2,4-dimethylhexanoyl chain is synthesized by the HR-PKS azaB and is proposed to be transferred to the C4-hydroxyl of azanigerone E by the acyltransferase azaD directly from the ACP domain of azaB. Alternatively, the 2,4-dimethyl-hexanoyl chain may be offloaded from the HR-PKS as a carboxylic acid and converted to an acyl-CoA by azaF. The resulting acyl-CoA molecule could then be taken up as a substrate by AzaD to form azanigerone B. To yield the carboxylic acid substituent in azanigerone A, the hydroxypropyl side chain of azanigerone B would need to undergo a C-C oxidative cleavage catalyzed by cytochrome P450 AzaI. AzaI is proposed to act on a vicinal diol that leads to a C-C bond scission either through an alkoxyradical intermediate or a peroxy complex. In the biosynthesis of azanigerone A, azanigerone B first undergoes hydroxylation at C10, possibly catalyzed by one of the two FAD-dependent monooxygenases encoded in the cluster, azaG or azaL, resulting in the vicinal diol azanigerone C. Oxidative cleavage of azanigerone C by azaI would yield the corresponding aldehyde derivative of azanigerone A. Finally, the dehydrogenase azaJ is proposed to convert the aldehyde functional group into the carboxylic acid, completing the conversion from azanigerone B to azanigerone A. Alternatively, the oxidation of aldehyde to carboxylic acid may be catalyzed by the same P450 enzyme azaI via consecutive oxidation or by endogenous alcohol dehydrogenase. In Aspergillus niger (strain ATCC 1015 / CBS 113.46 / FGSC A1144 / LSHB Ac4 / NCTC 3858a / NRRL 328 / USDA 3528.7), this protein is Probable esterase azaC.